Consider the following 436-residue polypeptide: Hydroxycinnamoyltransferase (436 aa).

Residues His154 and Asp383 each act as proton acceptor in the active site.

Belongs to the plant acyltransferase family. In terms of tissue distribution, mostly expressed in stems, and, to a lower extent, in bulbs.

It participates in phenylpropanoid metabolism. Hydroxycinnamoyl transferase that catalyzes the transfer of an acyl from p-coumaryol-CoA to various acyl acceptors. Can use feruloyl-CoA and caffeoyl-CoA as acyl donors. In Narcissus pseudonarcissus (Daffodil), this protein is Hydroxycinnamoyltransferase.